A 134-amino-acid chain; its full sequence is Tripartite terminase subunit 2 (134 aa).

Belongs to the herpesviridae TRM2 protein family. As to quaternary structure, associates with TRM1 and TRM3 to form the tripartite terminase complex.

It is found in the host nucleus. Its function is as follows. Component of the molecular motor that translocates viral genomic DNA in empty capsid during DNA packaging. Forms a tripartite terminase complex together with TRM1 and TRM3 in the host cytoplasm. Once the complex reaches the host nucleus, it interacts with the capsid portal vertex. This portal forms a ring in which genomic DNA is translocated into the capsid. The polypeptide is Tripartite terminase subunit 2 (Gallus gallus (Chicken)).